The chain runs to 271 residues: Ribosomal RNA small subunit methyltransferase A (271 aa).

S-adenosyl-L-methionine-binding residues include N18, L20, G45, E66, D91, and N112.

This sequence belongs to the class I-like SAM-binding methyltransferase superfamily. rRNA adenine N(6)-methyltransferase family. RsmA subfamily.

It is found in the cytoplasm. It catalyses the reaction adenosine(1518)/adenosine(1519) in 16S rRNA + 4 S-adenosyl-L-methionine = N(6)-dimethyladenosine(1518)/N(6)-dimethyladenosine(1519) in 16S rRNA + 4 S-adenosyl-L-homocysteine + 4 H(+). Specifically dimethylates two adjacent adenosines (A1518 and A1519) in the loop of a conserved hairpin near the 3'-end of 16S rRNA in the 30S particle. May play a critical role in biogenesis of 30S subunits. The protein is Ribosomal RNA small subunit methyltransferase A of Vibrio cholerae serotype O1 (strain ATCC 39315 / El Tor Inaba N16961).